The following is a 328-amino-acid chain: tRNA uridine(34) hydroxylase (328 aa).

In terms of domain architecture, Rhodanese spans 130–224 (LDEDTVVLDT…YGKDPEVQGE (95 aa)). Cys184 serves as the catalytic Cysteine persulfide intermediate.

The protein belongs to the TrhO family.

The enzyme catalyses uridine(34) in tRNA + AH2 + O2 = 5-hydroxyuridine(34) in tRNA + A + H2O. Catalyzes oxygen-dependent 5-hydroxyuridine (ho5U) modification at position 34 in tRNAs. This is tRNA uridine(34) hydroxylase from Streptococcus gordonii (strain Challis / ATCC 35105 / BCRC 15272 / CH1 / DL1 / V288).